Reading from the N-terminus, the 504-residue chain is Flavin-dependent halogenase armH3 (504 aa).

Positions 16, 19, 49, and 149 each coordinate FAD. Positions 329 and 330 each coordinate chloride. I331 is a binding site for FAD. Residues 444 to 475 (NNLRTPVDTGAADVKAKHAPSETDAQNPLQSM) are disordered.

The protein belongs to the flavin-dependent halogenase family.

It carries out the reaction melleolide F + FADH2 + chloride + O2 = 6'-chloromelleolide F + FAD + 2 H2O + H(+). Its function is as follows. Flavin-dependent halogenase involved in the biosynthesis of melleolides, a range of antifungal and phytotoxic polyketide derivatives composed of an orsellinic acid (OA) moiety esterified to various sesquiterpene alcohols. The halogenase catalyzes the transfer of a single chlorine atom to the melleolide backbone, resulting in a 6'-chloromelleolide product. The enzyme acts on free substrate and does not depend on carrier-protein-dependent acceptor molecules. The polypeptide is Flavin-dependent halogenase armH3 (Armillaria mellea (Honey mushroom)).